A 118-amino-acid polypeptide reads, in one-letter code: Small ribosomal subunit protein uS13 (118 aa).

The disordered stretch occupies residues 94–118; that stretch reads SLPLRGQRTKTNARTRKGPRKPIRK.

The protein belongs to the universal ribosomal protein uS13 family. As to quaternary structure, part of the 30S ribosomal subunit. Forms a loose heterodimer with protein S19. Forms two bridges to the 50S subunit in the 70S ribosome.

Functionally, located at the top of the head of the 30S subunit, it contacts several helices of the 16S rRNA. In the 70S ribosome it contacts the 23S rRNA (bridge B1a) and protein L5 of the 50S subunit (bridge B1b), connecting the 2 subunits; these bridges are implicated in subunit movement. Contacts the tRNAs in the A and P-sites. The sequence is that of Small ribosomal subunit protein uS13 from Shewanella sediminis (strain HAW-EB3).